The chain runs to 257 residues: Protein windbeutel (257 aa).

A signal peptide spans 1 to 21; that stretch reads MMHILVTLLLVAIHSIPTTWA. The CXXC motif stretch occupies residues 24–27; the sequence is CTGC. The Prevents secretion from ER motif lies at 254–257; sequence KEEL.

Homodimer. Interacts with pip; the interaction is direct and does not require pip to be folded. In terms of tissue distribution, briefly expressed in the follicle cells of the ovary, at around the time when the dorsoventral axis of the egg chamber is first established.

The protein localises to the endoplasmic reticulum lumen. Probable chaperone protein involved in dorsoventral axis patterning in early embryos. Probably acts by folding and targeting pipe (pip) into the Golgi. The chain is Protein windbeutel from Drosophila melanogaster (Fruit fly).